The following is a 427-amino-acid chain: Serine--tRNA ligase (427 aa).

An L-serine-binding site is contributed by 229-231 (TAE). 260 to 262 (RSE) contacts ATP. Glutamate 283 is a binding site for L-serine. ATP is bound at residue 347–350 (EISS). Residue serine 383 coordinates L-serine.

This sequence belongs to the class-II aminoacyl-tRNA synthetase family. Type-1 seryl-tRNA synthetase subfamily. As to quaternary structure, homodimer. The tRNA molecule binds across the dimer.

The protein resides in the cytoplasm. It carries out the reaction tRNA(Ser) + L-serine + ATP = L-seryl-tRNA(Ser) + AMP + diphosphate + H(+). It catalyses the reaction tRNA(Sec) + L-serine + ATP = L-seryl-tRNA(Sec) + AMP + diphosphate + H(+). It participates in aminoacyl-tRNA biosynthesis; selenocysteinyl-tRNA(Sec) biosynthesis; L-seryl-tRNA(Sec) from L-serine and tRNA(Sec): step 1/1. In terms of biological role, catalyzes the attachment of serine to tRNA(Ser). Is also able to aminoacylate tRNA(Sec) with serine, to form the misacylated tRNA L-seryl-tRNA(Sec), which will be further converted into selenocysteinyl-tRNA(Sec). The polypeptide is Serine--tRNA ligase (Oleidesulfovibrio alaskensis (strain ATCC BAA-1058 / DSM 17464 / G20) (Desulfovibrio alaskensis)).